The sequence spans 403 residues: Phosphoglycerate kinase (403 aa).

Residues 22-24, R37, 60-63, R119, and R152 contribute to the substrate site; these read DFN and HFGR. ATP contacts are provided by residues K202, E324, and 354–357; that span reads GGDT.

It belongs to the phosphoglycerate kinase family. As to quaternary structure, monomer.

It is found in the cytoplasm. It catalyses the reaction (2R)-3-phosphoglycerate + ATP = (2R)-3-phospho-glyceroyl phosphate + ADP. It functions in the pathway carbohydrate degradation; glycolysis; pyruvate from D-glyceraldehyde 3-phosphate: step 2/5. This Maricaulis maris (strain MCS10) (Caulobacter maris) protein is Phosphoglycerate kinase.